A 411-amino-acid polypeptide reads, in one-letter code: Lissencephaly-1 homolog (411 aa).

Residues 9–41 enclose the LisH domain; it reads QREELNQAIADYLGSNGYSSALEAFRKEADISG. Residues 56–83 are a coiled coil; sequence TSVIRLQKKVMELEAKLSEAEKEVIEGA. 7 WD repeats span residues 106 to 147, 149 to 187, 191 to 230, 233 to 272, 275 to 334, 337 to 376, and 379 to 411; these read GHRA…RSLK, HTSS…DCVK, GHDH…CVKT, GHRE…CKAE, AHDH…CLFV, GHDN…FMKT, and AHQH…WECR.

Belongs to the WD repeat LIS1/nudF family.

It localises to the cytoplasm. The protein localises to the cytoskeleton. Its subcellular location is the microtubule organizing center. It is found in the centrosome. In terms of biological role, positively regulates the activity of the minus-end directed microtubule motor protein dynein. May enhance dynein-mediated microtubule sliding by targeting dynein to the microtubule plus end. Required for several dynein- and microtubule-dependent processes. The protein is Lissencephaly-1 homolog of Glossina morsitans morsitans (Savannah tsetse fly).